The primary structure comprises 91 residues: Small ribosomal subunit protein bS16c (91 aa).

It belongs to the bacterial ribosomal protein bS16 family.

The protein resides in the plastid. It is found in the chloroplast. The protein is Small ribosomal subunit protein bS16c of Pelargonium hortorum (Common geranium).